Here is a 725-residue protein sequence, read N- to C-terminus: Ribosomal RNA large subunit methyltransferase K/L (725 aa).

In terms of domain architecture, THUMP spans 46–157; it reads VAYRLCLWSR…RGQATLSLDL (112 aa). The interval 393 to 412 is disordered; sequence TGERGERNDDGQARAPSEPA. The segment covering 395 to 404 has biased composition (basic and acidic residues); the sequence is ERGERNDDGQ.

It belongs to the methyltransferase superfamily. RlmKL family.

The protein localises to the cytoplasm. The catalysed reaction is guanosine(2445) in 23S rRNA + S-adenosyl-L-methionine = N(2)-methylguanosine(2445) in 23S rRNA + S-adenosyl-L-homocysteine + H(+). It carries out the reaction guanosine(2069) in 23S rRNA + S-adenosyl-L-methionine = N(2)-methylguanosine(2069) in 23S rRNA + S-adenosyl-L-homocysteine + H(+). Its function is as follows. Specifically methylates the guanine in position 2445 (m2G2445) and the guanine in position 2069 (m7G2069) of 23S rRNA. This is Ribosomal RNA large subunit methyltransferase K/L from Pseudomonas paraeruginosa (strain DSM 24068 / PA7) (Pseudomonas aeruginosa (strain PA7)).